We begin with the raw amino-acid sequence, 463 residues long: Protoheme IX farnesyltransferase (463 aa).

The unknown stretch occupies residues 1-193; sequence MAESRTFTGL…AYFRLMKPRL (193 aa). A run of 4 helical transmembrane segments spans residues 6 to 26, 54 to 74, 89 to 109, and 115 to 135; these read TFTG…LAGA, LLVA…VVAM, AAII…AIVA, and ALPG…VLAL. The segment at 144 to 170 is disordered; that stretch reads GSDDETPVKNPTPAPEPAGDDTPDRTP. 9 helical membrane passes run 193–213, 218–238, 265–285, 286–306, 314–334, 336–356, 387–407, 409–429, and 441–461; these read LMWL…GQTL, VLLT…FNHV, ALAF…QVNA, LVAV…TLVL, TVLG…AADG, VGLP…AHFY, IVYY…LTPL, WLYA…VVLL, and AFHA…VDAL. The segment at 194-460 is protoheme IX prenyltransferase; the sequence is MWLLCLVAAA…AVLIAIVVDA (267 aa).

The protein in the C-terminal section; belongs to the UbiA prenyltransferase family. Protoheme IX farnesyltransferase subfamily.

The protein localises to the cell membrane. It carries out the reaction heme b + (2E,6E)-farnesyl diphosphate + H2O = Fe(II)-heme o + diphosphate. It functions in the pathway porphyrin-containing compound metabolism; heme O biosynthesis; heme O from protoheme: step 1/1. Converts heme B (protoheme IX) to heme O by substitution of the vinyl group on carbon 2 of heme B porphyrin ring with a hydroxyethyl farnesyl side group. The protein is Protoheme IX farnesyltransferase (ctaB) of Haloarcula marismortui (strain ATCC 43049 / DSM 3752 / JCM 8966 / VKM B-1809) (Halobacterium marismortui).